We begin with the raw amino-acid sequence, 190 residues long: Large ribosomal subunit protein uL5 (190 aa).

The protein belongs to the universal ribosomal protein uL5 family. As to quaternary structure, part of the 50S ribosomal subunit; part of the 5S rRNA/L5/L18/L25 subcomplex. Contacts the 5S rRNA and the P site tRNA. Forms a bridge to the 30S subunit in the 70S ribosome.

Functionally, this is one of the proteins that bind and probably mediate the attachment of the 5S RNA into the large ribosomal subunit, where it forms part of the central protuberance. In the 70S ribosome it contacts protein S13 of the 30S subunit (bridge B1b), connecting the 2 subunits; this bridge is implicated in subunit movement. Contacts the P site tRNA; the 5S rRNA and some of its associated proteins might help stabilize positioning of ribosome-bound tRNAs. The chain is Large ribosomal subunit protein uL5 from Bifidobacterium adolescentis (strain ATCC 15703 / DSM 20083 / NCTC 11814 / E194a).